Here is a 513-residue protein sequence, read N- to C-terminus: Xylose import ATP-binding protein XylG (513 aa).

ABC transporter domains follow at residues Leu5 to Glu242 and Leu259 to Glu505. Gly37–Ser44 serves as a coordination point for ATP.

This sequence belongs to the ABC transporter superfamily. Xylose importer (TC 3.A.1.2.4) family. The complex is composed of two ATP-binding proteins (XylG), two transmembrane proteins (XylH) and a solute-binding protein (XylF).

The protein resides in the cell inner membrane. The catalysed reaction is D-xylose(out) + ATP + H2O = D-xylose(in) + ADP + phosphate + H(+). Its function is as follows. Part of the ABC transporter complex XylFGH involved in xylose import. Responsible for energy coupling to the transport system. This Pectobacterium atrosepticum (strain SCRI 1043 / ATCC BAA-672) (Erwinia carotovora subsp. atroseptica) protein is Xylose import ATP-binding protein XylG.